The sequence spans 376 residues: Queuine tRNA-ribosyltransferase (376 aa).

The active-site Proton acceptor is aspartate 93. Substrate contacts are provided by residues aspartate 93–phenylalanine 97, aspartate 147, glutamine 191, and glycine 218. The tract at residues glycine 249–aspartate 255 is RNA binding. Aspartate 268 acts as the Nucleophile in catalysis. An RNA binding; important for wobble base 34 recognition region spans residues threonine 273–arginine 277. Zn(2+)-binding residues include cysteine 306, cysteine 308, cysteine 311, and histidine 337.

Belongs to the queuine tRNA-ribosyltransferase family. As to quaternary structure, homodimer. Within each dimer, one monomer is responsible for RNA recognition and catalysis, while the other monomer binds to the replacement base PreQ1. The cofactor is Zn(2+).

It catalyses the reaction 7-aminomethyl-7-carbaguanine + guanosine(34) in tRNA = 7-aminomethyl-7-carbaguanosine(34) in tRNA + guanine. The protein operates within tRNA modification; tRNA-queuosine biosynthesis. Its function is as follows. Catalyzes the base-exchange of a guanine (G) residue with the queuine precursor 7-aminomethyl-7-deazaguanine (PreQ1) at position 34 (anticodon wobble position) in tRNAs with GU(N) anticodons (tRNA-Asp, -Asn, -His and -Tyr). Catalysis occurs through a double-displacement mechanism. The nucleophile active site attacks the C1' of nucleotide 34 to detach the guanine base from the RNA, forming a covalent enzyme-RNA intermediate. The proton acceptor active site deprotonates the incoming PreQ1, allowing a nucleophilic attack on the C1' of the ribose to form the product. After dissociation, two additional enzymatic reactions on the tRNA convert PreQ1 to queuine (Q), resulting in the hypermodified nucleoside queuosine (7-(((4,5-cis-dihydroxy-2-cyclopenten-1-yl)amino)methyl)-7-deazaguanosine). This Histophilus somni (strain 129Pt) (Haemophilus somnus) protein is Queuine tRNA-ribosyltransferase.